The chain runs to 124 residues: Small ribosomal subunit protein bS6 (124 aa).

Positions 96–124 are disordered; sequence ETAPSPMMKEVQREEARKAAQTTTEGQAA. Polar residues predominate over residues 115 to 124; sequence AQTTTEGQAA.

The protein belongs to the bacterial ribosomal protein bS6 family.

Binds together with bS18 to 16S ribosomal RNA. The polypeptide is Small ribosomal subunit protein bS6 (Cupriavidus necator (strain ATCC 17699 / DSM 428 / KCTC 22496 / NCIMB 10442 / H16 / Stanier 337) (Ralstonia eutropha)).